The chain runs to 219 residues: 3-dehydroquinate dehydratase (219 aa).

Residues Ser-10, 29–31 (EVR), and Arg-59 each bind 3-dehydroquinate. Residue His-116 is the Proton donor/acceptor of the active site. The active-site Schiff-base intermediate with substrate is Lys-142. 3-dehydroquinate is bound by residues Arg-180 and Gln-203.

The protein belongs to the type-I 3-dehydroquinase family. In terms of assembly, homodimer.

The catalysed reaction is 3-dehydroquinate = 3-dehydroshikimate + H2O. It functions in the pathway metabolic intermediate biosynthesis; chorismate biosynthesis; chorismate from D-erythrose 4-phosphate and phosphoenolpyruvate: step 3/7. In terms of biological role, involved in the third step of the chorismate pathway, which leads to the biosynthesis of aromatic amino acids. Catalyzes the cis-dehydration of 3-dehydroquinate (DHQ) and introduces the first double bond of the aromatic ring to yield 3-dehydroshikimate. The protein is 3-dehydroquinate dehydratase of Methanocella arvoryzae (strain DSM 22066 / NBRC 105507 / MRE50).